The primary structure comprises 295 residues: Ribosomal protein L11 methyltransferase (295 aa).

The S-adenosyl-L-methionine site is built by Thr146, Gly167, Asp189, and Asn231.

Belongs to the methyltransferase superfamily. PrmA family.

The protein localises to the cytoplasm. It carries out the reaction L-lysyl-[protein] + 3 S-adenosyl-L-methionine = N(6),N(6),N(6)-trimethyl-L-lysyl-[protein] + 3 S-adenosyl-L-homocysteine + 3 H(+). Its function is as follows. Methylates ribosomal protein L11. This chain is Ribosomal protein L11 methyltransferase, found in Vibrio cholerae serotype O1 (strain M66-2).